A 275-amino-acid chain; its full sequence is 3-methyl-2-oxobutanoate hydroxymethyltransferase (275 aa).

2 residues coordinate Mg(2+): Asp49 and Asp88. Residues 49 to 50 (DS), Asp88, and Lys118 each bind 3-methyl-2-oxobutanoate. Glu120 contacts Mg(2+). The active-site Proton acceptor is Glu187.

The protein belongs to the PanB family. As to quaternary structure, homodecamer; pentamer of dimers. It depends on Mg(2+) as a cofactor.

The protein resides in the cytoplasm. The catalysed reaction is 3-methyl-2-oxobutanoate + (6R)-5,10-methylene-5,6,7,8-tetrahydrofolate + H2O = 2-dehydropantoate + (6S)-5,6,7,8-tetrahydrofolate. Its pathway is cofactor biosynthesis; (R)-pantothenate biosynthesis; (R)-pantoate from 3-methyl-2-oxobutanoate: step 1/2. Functionally, catalyzes the reversible reaction in which hydroxymethyl group from 5,10-methylenetetrahydrofolate is transferred onto alpha-ketoisovalerate to form ketopantoate. This chain is 3-methyl-2-oxobutanoate hydroxymethyltransferase, found in Hyphomonas neptunium (strain ATCC 15444).